Here is a 305-residue protein sequence, read N- to C-terminus: UDP-N-acetylenolpyruvoylglucosamine reductase (305 aa).

Positions 37–202 (GIGGPARFLA…LSVTFNLEPK (166 aa)) constitute an FAD-binding PCMH-type domain. Arg183 is an active-site residue.

It belongs to the MurB family. FAD serves as cofactor.

The protein resides in the cytoplasm. It carries out the reaction UDP-N-acetyl-alpha-D-muramate + NADP(+) = UDP-N-acetyl-3-O-(1-carboxyvinyl)-alpha-D-glucosamine + NADPH + H(+). It functions in the pathway cell wall biogenesis; peptidoglycan biosynthesis. Cell wall formation. The polypeptide is UDP-N-acetylenolpyruvoylglucosamine reductase (Rhodopirellula baltica (strain DSM 10527 / NCIMB 13988 / SH1)).